A 145-amino-acid chain; its full sequence is 3-hydroxyacyl-[acyl-carrier-protein] dehydratase FabZ (145 aa).

H47 is a catalytic residue.

This sequence belongs to the thioester dehydratase family. FabZ subfamily.

It is found in the cytoplasm. The enzyme catalyses a (3R)-hydroxyacyl-[ACP] = a (2E)-enoyl-[ACP] + H2O. Functionally, involved in unsaturated fatty acids biosynthesis. Catalyzes the dehydration of short chain beta-hydroxyacyl-ACPs and long chain saturated and unsaturated beta-hydroxyacyl-ACPs. The protein is 3-hydroxyacyl-[acyl-carrier-protein] dehydratase FabZ of Chromohalobacter salexigens (strain ATCC BAA-138 / DSM 3043 / CIP 106854 / NCIMB 13768 / 1H11).